The following is a 247-amino-acid chain: ATP synthase subunit a, chloroplastic (247 aa).

A run of 5 helical transmembrane segments spans residues 38-58 (QVLI…IIAV), 95-115 (VPFI…GALL), 134-154 (INTT…AGLS), 199-219 (LVVV…VMFL), and 220-240 (GLFT…AYIG).

The protein belongs to the ATPase A chain family. As to quaternary structure, F-type ATPases have 2 components, CF(1) - the catalytic core - and CF(0) - the membrane proton channel. CF(1) has five subunits: alpha(3), beta(3), gamma(1), delta(1), epsilon(1). CF(0) has four main subunits: a, b, b' and c.

It is found in the plastid. The protein resides in the chloroplast thylakoid membrane. In terms of biological role, key component of the proton channel; it plays a direct role in the translocation of protons across the membrane. The protein is ATP synthase subunit a, chloroplastic of Oryza nivara (Indian wild rice).